A 306-amino-acid polypeptide reads, in one-letter code: uncharacterized protein (306 aa).

The protein to M.tuberculosis Rv1486c, M.bovis Mb1522c and M.leprae ML1804.

This is an uncharacterized protein from Mycobacterium avium.